We begin with the raw amino-acid sequence, 138 residues long: PTS system sorbose-specific EIIA component (138 aa).

In terms of domain architecture, PTS EIIA type-4 spans 1 to 125 (MEIILVGHAH…KIKEEFSTSL (125 aa)). The active-site Tele-phosphohistidine intermediate is His8. At His8 the chain carries Phosphohistidine; by HPr.

It localises to the cytoplasm. Functionally, the phosphoenolpyruvate-dependent sugar phosphotransferase system (PTS), a major carbohydrate active transport system, catalyzes the phosphorylation of incoming sugar substrates concomitant with their translocation across the cell membrane. The enzyme II SorABCD PTS system is involved in L-sorbose transport. The sequence is that of PTS system sorbose-specific EIIA component from Lacticaseibacillus casei (Lactobacillus casei).